A 351-amino-acid chain; its full sequence is Autoinducer 2 import system permease protein LsrC (351 aa).

A run of 9 helical transmembrane segments spans residues 14-34, 39-59, 70-90, 93-113, 115-135, 155-175, 213-233, 252-272, and 284-304; these read LLAILTLFALLGIIDRNYFSL, MIFSSAQILILLAIGATLVML, ITGLCAVTVGMALNAGFGLAA, LFALLVGMVAGFFNGILVTWL, IPAIVATLGTLGLYRGLMLLL, ILFSISPIGWLTMLLILAMAW, MNGVMAALAGIVFASQIGFIP, GISLLGGTGTIIGAILGAFLL, and LPAWWNDFIAGLVLLGVLVFD.

It belongs to the binding-protein-dependent transport system permease family. AraH/RbsC subfamily. The complex is composed of two ATP-binding proteins (LsrA), two transmembrane proteins (LsrC and LsrD) and a solute-binding protein (LsrB).

Its subcellular location is the cell inner membrane. Functionally, part of the ABC transporter complex LsrABCD involved in autoinducer 2 (AI-2) import. Probably responsible for the translocation of the substrate across the membrane. In Yersinia pestis bv. Antiqua (strain Antiqua), this protein is Autoinducer 2 import system permease protein LsrC (lsrC).